The chain runs to 142 residues: Group IIE secretory phospholipase A2 (142 aa).

Residues 1-19 form the signal peptide; that stretch reads MKSPHVLVFLCLLVALVTG. Ca(2+) is bound by residues D41, G43, Y45, G47, and G49. Cystine bridges form between C44–C135, C46–C62, C61–C115, C67–C142, C68–C108, C77–C101, and C95–C106. Residue H65 is part of the active site. Position 66 (D66) interacts with Ca(2+). Residue D109 is part of the active site. Ca(2+) is bound by residues Y130 and N132.

The protein belongs to the phospholipase A2 family. It depends on Ca(2+) as a cofactor. In terms of tissue distribution, restricted to the brain, heart, lung, and placenta.

It localises to the secreted. It is found in the cytoplasm. It carries out the reaction a 1,2-diacyl-sn-glycero-3-phosphoethanolamine + H2O = a 1-acyl-sn-glycero-3-phosphoethanolamine + a fatty acid + H(+). It catalyses the reaction 1-hexadecanoyl-2-(9Z-octadecenoyl)-sn-glycero-3-phosphoethanolamine + H2O = 1-hexadecanoyl-sn-glycero-3-phosphoethanolamine + (9Z)-octadecenoate + H(+). The catalysed reaction is 1-hexadecanoyl-2-(9Z,12Z-octadecadienoyl)-sn-glycero-3-phosphoethanolamine + H2O = 1-hexadecanoyl-sn-glycero-3-phosphoethanolamine + (9Z,12Z)-octadecadienoate + H(+). The enzyme catalyses 1-hexadecanoyl-2-(5Z,8Z,11Z,14Z-eicosatetraenoyl)-sn-glycero-3-phosphoethanolamine + H2O = 1-hexadecanoyl-sn-glycero-3-phosphoethanolamine + (5Z,8Z,11Z,14Z)-eicosatetraenoate + H(+). It carries out the reaction 1,2-dihexadecanoyl-sn-glycero-3-phospho-(1'-sn-glycerol) + H2O = 1-hexadecanoyl-sn-glycero-3-phospho-(1'-sn-glycerol) + hexadecanoate + H(+). It catalyses the reaction 1-hexadecanoyl-2-(9Z-octadecenoyl)-sn-glycero-3-phosphoglycerol + H2O = 1-hexadecanoyl-sn-glycero-3-phosphoglycerol + (9Z)-octadecenoate + H(+). The catalysed reaction is a 1,2-diacyl-sn-glycero-3-phosphocholine + H2O = a 1-acyl-sn-glycero-3-phosphocholine + a fatty acid + H(+). The enzyme catalyses 1,2-dihexadecanoyl-sn-glycero-3-phosphocholine + H2O = 1-hexadecanoyl-sn-glycero-3-phosphocholine + hexadecanoate + H(+). It carries out the reaction 1-hexadecanoyl-2-(9Z-octadecenoyl)-sn-glycero-3-phosphocholine + H2O = 1-hexadecanoyl-sn-glycero-3-phosphocholine + (9Z)-octadecenoate + H(+). It catalyses the reaction 1-hexadecanoyl-2-(9Z,12Z-octadecadienoyl)-sn-glycero-3-phosphocholine + H2O = (9Z,12Z)-octadecadienoate + 1-hexadecanoyl-sn-glycero-3-phosphocholine + H(+). The catalysed reaction is 1-hexadecanoyl-2-(4Z,7Z,10Z,13Z,16Z,19Z-docosahexaenoyl)-sn-glycero-3-phosphocholine + H2O = (4Z,7Z,10Z,13Z,16Z,19Z)-docosahexaenoate + 1-hexadecanoyl-sn-glycero-3-phosphocholine + H(+). Secretory calcium-dependent phospholipase A2 that primarily targets extracellular phospholipids. Hydrolyzes the ester bond of the fatty acyl group attached at sn-2 position of phospholipids (phospholipase A2 activity), releasing various unsaturated fatty acids including oleoate, linoleoate, arachidonate, docosahexaenoate and lysophosphatidylethanolamines in preference to lysophosphatidylcholines. In response to high-fat diet, hydrolyzes minor lipoprotein phospholipids including phosphatidylserines, phosphatidylinositols and phosphatidylglycerols, altering lipoprotein composition and fat storage in adipose tissue and liver. May act in an autocrine and paracrine manner. Contributes to lipid remodeling of cellular membranes and generation of lipid mediators involved in pathogen clearance. Cleaves sn-2 fatty acyl chains of phosphatidylglycerols and phosphatidylethanolamines, which are major components of membrane phospholipids in bacteria. Acts as a hair follicle phospholipase A2. Selectively releases lysophosphatidylethanolamines (LPE) and various unsaturated fatty acids in skin to regulate hair follicle homeostasis. May regulate the inflammatory response by releasing arachidonate, a precursor of prostaglandins and leukotrienes. Upon allergen exposure, may participate in allergic inflammatory response by enhancing leukotriene C4 synthesis and degranulation in mast cells. This chain is Group IIE secretory phospholipase A2 (PLA2G2E), found in Homo sapiens (Human).